The primary structure comprises 259 residues: DNA-directed RNA polymerase subunit Rpo3 (259 aa).

Belongs to the archaeal Rpo3/eukaryotic RPB3 RNA polymerase subunit family. As to quaternary structure, part of the RNA polymerase complex.

The protein localises to the cytoplasm. It carries out the reaction RNA(n) + a ribonucleoside 5'-triphosphate = RNA(n+1) + diphosphate. In terms of biological role, DNA-dependent RNA polymerase (RNAP) catalyzes the transcription of DNA into RNA using the four ribonucleoside triphosphates as substrates. This Pyrococcus horikoshii (strain ATCC 700860 / DSM 12428 / JCM 9974 / NBRC 100139 / OT-3) protein is DNA-directed RNA polymerase subunit Rpo3.